The following is a 352-amino-acid chain: MTQISERFLVQAHLDAKQPKALSPEEQAHYRAAIAAELKKQDAVMVAHYYCDPVIQALAEETGGCVADSLEMARFSNNHPASTVLVAGVRFMGETAKILNPEKRVFMPTLEATCSLDVGCPVDEFSAFCDQHPERTVVVYANTSAAVKARADWVVTSGCALEIVESLMDNGEKIIWAPDKHLGRYIQRETGADMLLWDGACIVHEEFKSKQLEDMKALYPEAAILVHPESPEAVIELADVVGSTSQMIAAAQRLPNKMFIVATDRGIFYKMQQLCPDKIFIEAPTAGNGAACRSCAHCPWMAMNTLERTLQCLREGGNEIFVEPALIPNAVRPLQRMLDFTQAARLRQAGNA.

The iminosuccinate site is built by His48 and Ser69. Cys114 contributes to the [4Fe-4S] cluster binding site. Residues Tyr140 to Asn142 and Ser157 each bind iminosuccinate. Position 201 (Cys201) interacts with [4Fe-4S] cluster. Iminosuccinate-binding positions include His227–Glu229 and Thr244. Residue Cys298 coordinates [4Fe-4S] cluster.

The protein belongs to the quinolinate synthase family. Type 1 subfamily. Requires [4Fe-4S] cluster as cofactor.

The protein localises to the cytoplasm. The enzyme catalyses iminosuccinate + dihydroxyacetone phosphate = quinolinate + phosphate + 2 H2O + H(+). It functions in the pathway cofactor biosynthesis; NAD(+) biosynthesis; quinolinate from iminoaspartate: step 1/1. In terms of biological role, catalyzes the condensation of iminoaspartate with dihydroxyacetone phosphate to form quinolinate. The protein is Quinolinate synthase of Pseudomonas syringae pv. tomato (strain ATCC BAA-871 / DC3000).